Reading from the N-terminus, the 291-residue chain is Lys-63-specific deubiquitinase BRCC36 (291 aa).

Alanine 2 carries the N-acetylalanine modification. Residues 12 to 179 (VHLESDAFLV…YTCFQSIQAQ (168 aa)) form the MPN domain. The Zn(2+) site is built by histidine 122, histidine 124, and aspartate 135. Positions 122-135 (HSHPHITVWPSHVD) match the JAMM motif motif. Serine 233 carries the post-translational modification Phosphoserine.

It belongs to the peptidase M67A family. BRCC36 subfamily. As to quaternary structure, component of the ARISC complex, at least composed of UIMC1/RAP80, ABRAXAS1, BRCC3/BRCC36, BABAM2 and BABAM1/NBA1. Component of the BRCA1-A complex, at least composed of BRCA1, BARD1, UIMC1/RAP80, ABRAXAS1, BRCC3/BRCC36, BABAM2 and BABAM1/NBA1. In the BRCA1-A complex, interacts directly with ABRAXAS1 and BABAM2. Component of the BRISC complex, at least composed of ABRAXAS2, BRCC3/BRCC36, BABAM2 and BABAM1/NBA1. Identified in a complex with SHMT2 and the other subunits of the BRISC complex. In the BRISC complex, interacts directly with ABRAXAS2. Identified in a complex with ABRAXAS2 and NUMA1. The BRISC complex interacts with the CSN complex. Component of the BRCA1/BRCA2 containing complex (BRCC), which also contains BRCA1, BRCA2, BARD1, BABAM2 and RAD51. BRCC is a ubiquitin E3 ligase complex that enhances cellular survival following DNA damage. Interacts with BRCA1. Binds polyubiquitin. Interacts with PWWP2B. Interacts with HDAC1; this interaction is enhanced in the presence of PWWP2B. Zn(2+) is required as a cofactor.

It localises to the nucleus. The protein localises to the cytoplasm. The protein resides in the cytoskeleton. It is found in the spindle pole. In terms of biological role, metalloprotease that specifically cleaves 'Lys-63'-linked polyubiquitin chains. Does not have activity toward 'Lys-48'-linked polyubiquitin chains. Component of the BRCA1-A complex, a complex that specifically recognizes 'Lys-63'-linked ubiquitinated histones H2A and H2AX at DNA lesions sites, leading to target the BRCA1-BARD1 heterodimer to sites of DNA damage at double-strand breaks (DSBs). In the BRCA1-A complex, it specifically removes 'Lys-63'-linked ubiquitin on histones H2A and H2AX, antagonizing the RNF8-dependent ubiquitination at double-strand breaks (DSBs). Catalytic subunit of the BRISC complex, a multiprotein complex that specifically cleaves 'Lys-63'-linked ubiquitin in various substrates. Mediates the specific 'Lys-63'-specific deubiquitination associated with the COP9 signalosome complex (CSN), via the interaction of the BRISC complex with the CSN complex. The BRISC complex is required for normal mitotic spindle assembly and microtubule attachment to kinetochores via its role in deubiquitinating NUMA1. Plays a role in interferon signaling via its role in the deubiquitination of the interferon receptor IFNAR1; deubiquitination increases IFNAR1 activity by enhancing its stability and cell surface expression. Acts as a regulator of the NLRP3 inflammasome by mediating deubiquitination of NLRP3, leading to NLRP3 inflammasome assembly. Down-regulates the response to bacterial lipopolysaccharide (LPS) via its role in IFNAR1 deubiquitination. Deubiquitinates HDAC1 and PWWP2B leading to their stabilization. The protein is Lys-63-specific deubiquitinase BRCC36 (Brcc3) of Mus musculus (Mouse).